The sequence spans 168 residues: Photosystem I assembly protein Ycf3 (168 aa).

TPR repeat units follow at residues Ala35–Pro68, Ser72–Leu105, and Gly120–Asn153.

The protein belongs to the Ycf3 family.

Its subcellular location is the plastid membrane. Essential for the assembly of the photosystem I (PSI) complex. May act as a chaperone-like factor to guide the assembly of the PSI subunits. This Cuscuta gronovii (Common dodder) protein is Photosystem I assembly protein Ycf3.